A 465-amino-acid chain; its full sequence is Ribulose bisphosphate carboxylase large chain (465 aa).

Residue K4 is modified to N6,N6,N6-trimethyllysine. Positions 113 and 163 each coordinate substrate. Catalysis depends on K165, which acts as the Proton acceptor. K167 is a binding site for substrate. Residues K191, D193, and E194 each coordinate Mg(2+). Position 191 is an N6-carboxylysine (K191). The Proton acceptor role is filled by H284. Substrate-binding residues include R285, H317, and S369.

This sequence belongs to the RuBisCO large chain family. Type I subfamily. In terms of assembly, heterohexadecamer of 8 large chains and 8 small chains; disulfide-linked. The disulfide link is formed within the large subunit homodimers. It depends on Mg(2+) as a cofactor. In terms of processing, the disulfide bond which can form in the large chain dimeric partners within the hexadecamer appears to be associated with oxidative stress and protein turnover.

The protein resides in the plastid. Its subcellular location is the chloroplast. The catalysed reaction is 2 (2R)-3-phosphoglycerate + 2 H(+) = D-ribulose 1,5-bisphosphate + CO2 + H2O. It carries out the reaction D-ribulose 1,5-bisphosphate + O2 = 2-phosphoglycolate + (2R)-3-phosphoglycerate + 2 H(+). Functionally, ruBisCO catalyzes two reactions: the carboxylation of D-ribulose 1,5-bisphosphate, the primary event in carbon dioxide fixation, as well as the oxidative fragmentation of the pentose substrate in the photorespiration process. Both reactions occur simultaneously and in competition at the same active site. This is Ribulose bisphosphate carboxylase large chain from Dillenia indica (Elephant apple).